A 101-amino-acid chain; its full sequence is Large ribosomal subunit protein uL23 (101 aa).

This sequence belongs to the universal ribosomal protein uL23 family. In terms of assembly, part of the 50S ribosomal subunit. Contacts protein L29, and trigger factor when it is bound to the ribosome.

In terms of biological role, one of the early assembly proteins it binds 23S rRNA. One of the proteins that surrounds the polypeptide exit tunnel on the outside of the ribosome. Forms the main docking site for trigger factor binding to the ribosome. This chain is Large ribosomal subunit protein uL23, found in Nocardia farcinica (strain IFM 10152).